A 166-amino-acid chain; its full sequence is Bacterial non-heme ferritin (166 aa).

The region spanning 2–145 (LSKNLLEALN…THINYLTRIG (144 aa)) is the Ferritin-like diiron domain. 5 residues coordinate Fe cation: Glu-17, Glu-50, His-53, Glu-94, and Gln-127.

This sequence belongs to the ferritin family. Prokaryotic subfamily.

Its subcellular location is the cytoplasm. The enzyme catalyses 4 Fe(2+) + O2 + 6 H2O = 4 iron(III) oxide-hydroxide + 12 H(+). Its function is as follows. Iron-storage protein. The sequence is that of Bacterial non-heme ferritin (ftnA) from Staphylococcus aureus (strain MRSA252).